Here is a 330-residue protein sequence, read N- to C-terminus: ADP-L-glycero-D-manno-heptose-6-epimerase (330 aa).

Residues 11–12 (FI), 32–33 (DN), Lys39, Lys54, 75–79 (EGACS), and Asn92 contribute to the NADP(+) site. Tyr139 serves as the catalytic Proton acceptor. NADP(+) is bound at residue Lys143. Asn168 serves as a coordination point for substrate. Positions 169 and 177 each coordinate NADP(+). Lys177 functions as the Proton acceptor in the catalytic mechanism. Residues Arg179, His186, 200–203 (FGEY), Arg213, and Tyr292 each bind substrate.

The protein belongs to the NAD(P)-dependent epimerase/dehydratase family. HldD subfamily. As to quaternary structure, homopentamer. NADP(+) serves as cofactor.

It catalyses the reaction ADP-D-glycero-beta-D-manno-heptose = ADP-L-glycero-beta-D-manno-heptose. It participates in nucleotide-sugar biosynthesis; ADP-L-glycero-beta-D-manno-heptose biosynthesis; ADP-L-glycero-beta-D-manno-heptose from D-glycero-beta-D-manno-heptose 7-phosphate: step 4/4. Functionally, catalyzes the interconversion between ADP-D-glycero-beta-D-manno-heptose and ADP-L-glycero-beta-D-manno-heptose via an epimerization at carbon 6 of the heptose. The sequence is that of ADP-L-glycero-D-manno-heptose-6-epimerase from Burkholderia cenocepacia (strain ATCC BAA-245 / DSM 16553 / LMG 16656 / NCTC 13227 / J2315 / CF5610) (Burkholderia cepacia (strain J2315)).